A 114-amino-acid chain; its full sequence is Cystatin Pr17a (114 aa).

The signal sequence occupies residues Met1 to Ala18. The region spanning Gly31–Lys109 is the Cystatin domain. Cys93 and Cys113 are disulfide-bonded.

The protein belongs to the cystatin family. As to expression, expressed by the venom gland (posterior main gland) (at protein level).

It is found in the secreted. In Platymeris rhadamanthus (Red spot assassin bug), this protein is Cystatin Pr17a.